We begin with the raw amino-acid sequence, 436 residues long: Ribulose bisphosphate carboxylase large chain (436 aa).

Substrate contacts are provided by Asn104 and Thr154. The active-site Proton acceptor is Lys156. Lys158 serves as a coordination point for substrate. The Mg(2+) site is built by Lys182, Asp184, and Glu185. The residue at position 182 (Lys182) is an N6-carboxylysine. His275 serves as the catalytic Proton acceptor. 3 residues coordinate substrate: Arg276, His308, and Ser360.

Belongs to the RuBisCO large chain family. Type I subfamily. As to quaternary structure, heterohexadecamer of 8 large chains and 8 small chains; disulfide-linked. The disulfide link is formed within the large subunit homodimers. Mg(2+) serves as cofactor. In terms of processing, the disulfide bond which can form in the large chain dimeric partners within the hexadecamer appears to be associated with oxidative stress and protein turnover.

It localises to the plastid. It is found in the chloroplast. It carries out the reaction 2 (2R)-3-phosphoglycerate + 2 H(+) = D-ribulose 1,5-bisphosphate + CO2 + H2O. It catalyses the reaction D-ribulose 1,5-bisphosphate + O2 = 2-phosphoglycolate + (2R)-3-phosphoglycerate + 2 H(+). Functionally, ruBisCO catalyzes two reactions: the carboxylation of D-ribulose 1,5-bisphosphate, the primary event in carbon dioxide fixation, as well as the oxidative fragmentation of the pentose substrate in the photorespiration process. Both reactions occur simultaneously and in competition at the same active site. The polypeptide is Ribulose bisphosphate carboxylase large chain (Euglena anabaena (Euglenaria anabaena)).